The sequence spans 145 residues: Deoxyuridine 5'-triphosphate nucleotidohydrolase (145 aa).

Substrate contacts are provided by residues 63–65, Gln-76, and 80–82; these read RSG and TVD.

This sequence belongs to the dUTPase family. Mg(2+) serves as cofactor.

The enzyme catalyses dUTP + H2O = dUMP + diphosphate + H(+). Its pathway is pyrimidine metabolism; dUMP biosynthesis; dUMP from dCTP (dUTP route): step 2/2. Its function is as follows. This enzyme is involved in nucleotide metabolism: it produces dUMP, the immediate precursor of thymidine nucleotides and it decreases the intracellular concentration of dUTP so that uracil cannot be incorporated into DNA. The protein is Deoxyuridine 5'-triphosphate nucleotidohydrolase of Chlamydia muridarum (strain MoPn / Nigg).